We begin with the raw amino-acid sequence, 147 residues long: Shadow of prion protein (147 aa).

The signal sequence occupies residues 1 to 24; the sequence is MNWTAATCWALLLAAAFLCDSCSA. The span at 26–43 shows a compositional bias: gly residues; sequence GGRGGARGSARGVRGGAR. Positions 26–45 are disordered; the sequence is GGRGGARGSARGVRGGARGA. An N-linked (GlcNAc...) asparagine glycan is attached at Asn-107. Residue Gly-122 is the site of GPI-anchor amidated glycine attachment. A propeptide spans 123 to 147 (removed in mature form); it reads SGSVHSPRICLLLGGTLGALELLRP.

Belongs to the SPRN family. In terms of processing, N-glycosylated. In terms of tissue distribution, mainly expressed in brain (at protein level). In brain, it is highly expressed in the hippocampus and cerebellum and is also expressed at lower level in other areas of the brain including the cerebral cortex, the thalamus and the medulla. In hippocampus and cerebellum it is highly expressed in the cell bodies of pyramidal cells and Purkinje cells, respectively.

Its subcellular location is the cell membrane. Prion-like protein that has PrP(C)-like neuroprotective activity. May act as a modulator for the biological actions of normal and abnormal PrP. The protein is Shadow of prion protein (Sprn) of Mus musculus (Mouse).